The primary structure comprises 471 residues: Putative multidrug resistance protein MdtD (471 aa).

Residues 1 to 11 (MTDLPDSTRWQ) lie on the Periplasmic side of the membrane. A helical transmembrane segment spans residues 12 to 32 (LWIVAFGFFMQSLDTTIVNTA). Over 33–48 (LPSMAQSLGESPLHMH) the chain is Cytoplasmic. Residues 49 to 69 (MVIVSYVLTVAVMLPASGWLA) traverse the membrane as a helical segment. Over 70-76 (DKVGVRN) the chain is Periplasmic. Residues 77 to 97 (IFFTAIVLFTLGSLFCALSGT) traverse the membrane as a helical segment. The Cytoplasmic portion of the chain corresponds to 98–101 (LNEL). Residues 102 to 124 (LLARALQGVGGAMMVPVGRLTVM) form a helical membrane-spanning segment. The Periplasmic segment spans residues 125–137 (KIVPREQYMAAMT). A helical membrane pass occupies residues 138–158 (FVTLPGQVGPLLGPALGGLLV). The Cytoplasmic segment spans residues 159–164 (EYASWH). Residues 165–185 (WIFLINIPVGIIGAIATLMLM) traverse the membrane as a helical segment. At 186–196 (PNYTMQTRRFD) the chain is on the periplasmic side. The helical transmembrane segment at 197 to 217 (LSGFLLLAVGMAVLTLALDGS) threads the bilayer. Residues 218-224 (KGTGLSP) lie on the Cytoplasmic side of the membrane. Residues 225–245 (LAIAGLVAVGVVALVLYLLHA) traverse the membrane as a helical segment. Topologically, residues 246 to 262 (RNNNRALFSLKLFRTRT) are periplasmic. A helical membrane pass occupies residues 263–283 (FSLGLAGSFAGRIGSGMLPFM). At 284-285 (TP) the chain is on the cytoplasmic side. Residues 286–306 (VFLQIGLGFSPFHAGLMMIPM) form a helical membrane-spanning segment. Topologically, residues 307 to 341 (VLGSMGMKRIVVQVVNRFGYRRVLVATTLGLSLVT) are periplasmic. Residues 342–362 (MLFMTTALLGWYYVLPFVLFL) form a helical membrane-spanning segment. At 363 to 395 (QGMVNSTRFSSMNTLTLKDLPDNLASSGNSLLS) the chain is on the cytoplasmic side. Residues 396–416 (MIMQLSMSIGVTIAGLLLGLF) form a helical membrane-spanning segment. Topologically, residues 417–430 (GSQHVSVDSGTTQT) are periplasmic. The chain crosses the membrane as a helical span at residues 431 to 451 (VFMYTWLSMAFIIALPAFIFA). Residues 452–471 (RVPNDTHQNVAISRRKRSAQ) are Cytoplasmic-facing.

This sequence belongs to the major facilitator superfamily. TCR/Tet family.

Its subcellular location is the cell inner membrane. The protein is Putative multidrug resistance protein MdtD of Escherichia coli O7:K1 (strain IAI39 / ExPEC).